Reading from the N-terminus, the 526-residue chain is CTP synthase (526 aa).

The amidoligase domain stretch occupies residues 1-270 (MKYIFVTGGV…ADVLSTHLGL (270 aa)). A CTP-binding site is contributed by S12. A UTP-binding site is contributed by S12. ATP-binding positions include 13-18 (GLGKGI) and D70. Positions 70 and 145 each coordinate Mg(2+). CTP-binding positions include 152–154 (DIE), 191–196 (KTKPTQ), and K227. UTP is bound by residues 191-196 (KTKPTQ) and K227. Residues 293-525 (VAIVSKYGIE…VEACRANKRT (233 aa)) enclose the Glutamine amidotransferase type-1 domain. G349 is a binding site for L-glutamine. Residue C376 is the Nucleophile; for glutamine hydrolysis of the active site. L-glutamine contacts are provided by residues 377 to 380 (LGFQ), E400, and R455. Active-site residues include H498 and E500.

It belongs to the CTP synthase family. As to quaternary structure, homotetramer.

The enzyme catalyses UTP + L-glutamine + ATP + H2O = CTP + L-glutamate + ADP + phosphate + 2 H(+). It catalyses the reaction L-glutamine + H2O = L-glutamate + NH4(+). The catalysed reaction is UTP + NH4(+) + ATP = CTP + ADP + phosphate + 2 H(+). The protein operates within pyrimidine metabolism; CTP biosynthesis via de novo pathway; CTP from UDP: step 2/2. Allosterically activated by GTP, when glutamine is the substrate; GTP has no effect on the reaction when ammonia is the substrate. The allosteric effector GTP functions by stabilizing the protein conformation that binds the tetrahedral intermediate(s) formed during glutamine hydrolysis. Inhibited by the product CTP, via allosteric rather than competitive inhibition. Catalyzes the ATP-dependent amination of UTP to CTP with either L-glutamine or ammonia as the source of nitrogen. Regulates intracellular CTP levels through interactions with the four ribonucleotide triphosphates. The protein is CTP synthase of Methanoregula boonei (strain DSM 21154 / JCM 14090 / 6A8).